The following is a 323-amino-acid chain: Aldo-keto reductase family 1 member C4 (323 aa).

Residues Gly20–Tyr24 and Asp50 contribute to the NADP(+) site. Tyr55 functions as the Proton donor in the catalytic mechanism. His117 is a binding site for substrate. Residues Ser166 to Asn167, Gln190, His216 to Thr221, and Lys270 to Asn280 each bind NADP(+).

It belongs to the aldo/keto reductase family. Monomer. In terms of tissue distribution, high expression in liver. Also expressed in kidney.

Its subcellular location is the cytoplasm. It is found in the cytosol. It carries out the reaction chlordecone alcohol + NADP(+) = chlordecone + NADPH + H(+). The catalysed reaction is a 3alpha-hydroxysteroid + NADP(+) = a 3-oxosteroid + NADPH + H(+). The enzyme catalyses a 3alpha-hydroxysteroid + NAD(+) = a 3-oxosteroid + NADH + H(+). It catalyses the reaction 5alpha-androstane-3alpha,17beta-diol + NADP(+) = 17beta-hydroxy-5alpha-androstan-3-one + NADPH + H(+). It carries out the reaction 5alpha-androstane-3beta,17beta-diol + NADP(+) = 17beta-hydroxy-5alpha-androstan-3-one + NADPH + H(+). The catalysed reaction is 5alpha-androstane-3alpha,17beta-diol + NAD(+) = 17beta-hydroxy-5alpha-androstan-3-one + NADH + H(+). The enzyme catalyses 17beta-estradiol + NADP(+) = estrone + NADPH + H(+). It catalyses the reaction 17beta-estradiol + NAD(+) = estrone + NADH + H(+). It carries out the reaction (20S)-hydroxypregn-4-en-3-one + NADP(+) = progesterone + NADPH + H(+). The catalysed reaction is (20S)-hydroxypregn-4-en-3-one + NAD(+) = progesterone + NADH + H(+). The enzyme catalyses androsterone + NADP(+) = 5alpha-androstan-3,17-dione + NADPH + H(+). It catalyses the reaction testosterone + NADP(+) = androst-4-ene-3,17-dione + NADPH + H(+). It carries out the reaction testosterone + NAD(+) = androst-4-ene-3,17-dione + NADH + H(+). The catalysed reaction is 3alpha-hydroxy-5alpha-androstane 17-O-(beta-D-glucuronate) + NADP(+) = 5alpha-dihydrotestosterone 17-O-(beta-D-glucuronate) + NADPH + H(+). The enzyme catalyses (3beta,5alpha,17beta)-3-hydroxy-androstan-17-yl sulfate + NADP(+) = 5alpha-dihydrotestosterone sulfate + NADPH + H(+). It catalyses the reaction 5alpha-androstane-3alpha,17beta-diol + NAD(+) = androsterone + NADH + H(+). The protein operates within steroid metabolism. With respect to regulation, potently inhibited by benzbromarone, 3',3'',5',5''-tetrabromophenolphthalein (TBPP) and o-cresolphthalein. Functionally, cytosolic aldo-keto reductase that catalyzes the NADH and NADPH-dependent reduction of ketosteroids to hydroxysteroids. Liver specific enzyme that acts as an NAD(P)(H)-dependent 3-, 17- and 20-ketosteroid reductase on the steroid nucleus and side chain. Displays the ability to catalyze both oxidation and reduction in vitro, but most probably acts as a reductase in vivo since the oxidase activity measured in vitro is inhibited by physiological concentration of NADPH. Acts preferentially as a 3-alpha-hydroxysteroid dehydrogenase (HSD) with a subsidiary 3-beta-HSD activity. Catalyzes efficiently the transformation of the potent androgen 5-alpha-dihydrotestosterone (5alpha-DHT or 17beta-hydroxy-5alpha-androstan-3-one) into the less active form, 5-alpha-androstan-3-alpha,17-beta-diol (3-alpha-diol). Catalyzes the reduction of estrone into 17beta-estradiol but with low efficiency. Metabolizes a broad spectrum of natural and synthetic therapeutic steroid and plays an important role in metabolism of androgens, estrogens, progestereone and conjugated steroids. Catalyzes the biotransformation of the pesticide chlordecone (kepone) to its corresponding alcohol leading to increased biliary excretion of the pesticide and concomitant reduction of its neurotoxicity since bile is the major excretory route. The protein is Aldo-keto reductase family 1 member C4 (AKR1C4) of Macaca fuscata fuscata (Japanese macaque).